Reading from the N-terminus, the 624-residue chain is NADPH-dependent diflavin oxidoreductase 1 (624 aa).

Residues 6-168 enclose the Flavodoxin-like domain; it reads IVILYGSETG…VYYEFEKRII (163 aa). Residues 12–17, 59–62, 106–115, and E142 each bind FMN; these read SETGNA, STTG, and LGDSSYPRFN. Positions 226–474 constitute an FAD-binding FR-type domain; that stretch reads ETIRHGTVKK…LQNNHLLHED (249 aa). FAD-binding positions include R384, 414–417, and 446–449; these read RFYS and GLCT. NADP(+)-binding positions include 539–540 and 548–552; these read SR and AKYVQ. W624 contacts FAD.

This sequence belongs to the NADPH-dependent diflavin oxidoreductase NDOR1 family. It in the N-terminal section; belongs to the flavodoxin family. The protein in the C-terminal section; belongs to the flavoprotein pyridine nucleotide cytochrome reductase family. In terms of assembly, interacts with DRE2; as part of the cytosolic iron-sulfur (Fe-S) protein assembly (CIA) machinery. Requires FAD as cofactor. FMN is required as a cofactor.

The protein resides in the cytoplasm. It localises to the mitochondrion. The catalysed reaction is 2 oxidized [2Fe-2S]-[protein] + NADPH = 2 reduced [2Fe-2S]-[protein] + NADP(+) + H(+). In terms of biological role, NADPH-dependent reductase which is a central component of the cytosolic iron-sulfur (Fe-S) protein assembly (CIA) machinery. Transfers electrons from NADPH via its FAD and FMN prosthetic groups to the [2Fe-2S] cluster of DRE2, another key component of the CIA machinery. In turn, this reduced cluster provides electrons for assembly of cytosolic iron-sulfur cluster proteins. Positively controls H(2)O(2)-induced cell death. This is NADPH-dependent diflavin oxidoreductase 1 from Kluyveromyces lactis (strain ATCC 8585 / CBS 2359 / DSM 70799 / NBRC 1267 / NRRL Y-1140 / WM37) (Yeast).